A 369-amino-acid polypeptide reads, in one-letter code: Peptide chain release factor 2 (369 aa).

Q250 carries the N5-methylglutamine modification.

It belongs to the prokaryotic/mitochondrial release factor family. In terms of processing, methylated by PrmC. Methylation increases the termination efficiency of RF2.

The protein resides in the cytoplasm. Its function is as follows. Peptide chain release factor 2 directs the termination of translation in response to the peptide chain termination codons UGA and UAA. The polypeptide is Peptide chain release factor 2 (prfB) (Rickettsia prowazekii (strain Madrid E)).